The primary structure comprises 231 residues: Large ribosomal subunit protein uL1 (231 aa).

Belongs to the universal ribosomal protein uL1 family. Part of the 50S ribosomal subunit.

Binds directly to 23S rRNA. The L1 stalk is quite mobile in the ribosome, and is involved in E site tRNA release. Functionally, protein L1 is also a translational repressor protein, it controls the translation of the L11 operon by binding to its mRNA. This Ralstonia pickettii (strain 12J) protein is Large ribosomal subunit protein uL1.